The primary structure comprises 612 residues: Protein MUK1 (612 aa).

Residues 40–50 (EDQNDNERSSC) show a composition bias toward basic and acidic residues. The segment at 40 to 66 (EDQNDNERSSCDGDENSTTGERLENNK) is disordered. The span at 55 to 66 (NSTTGERLENNK) shows a compositional bias: polar residues. Ser-67, Ser-163, Ser-185, and Ser-245 each carry phosphoserine. The region spanning 273 to 414 (TEYNKLLNEK…VEGLTKNDFS (142 aa)) is the VPS9 domain. Residues 494-560 (IRSYTPPHPN…SSASLEHGNR (67 aa)) form a disordered region. Low complexity predominate over residues 503 to 517 (NNTSNNNLHSSNNLN). Positions 518-529 (IPRSSSQLSMEL) are enriched in polar residues. Residues 530–542 (SNRDTTEMSRDGS) show a composition bias toward basic and acidic residues. Over residues 543 to 554 (RSTSSSSRSSAS) the composition is skewed to low complexity.

The protein localises to the cytoplasm. Putative GTPase-activating protein. This is Protein MUK1 (MUK1) from Saccharomyces cerevisiae (strain ATCC 204508 / S288c) (Baker's yeast).